The primary structure comprises 75 residues: Stewaprin-a (75 aa).

An N-terminal signal peptide occupies residues 1–24 (MSSGGLLLLLGLLTLWAELIPVSG). The WAP domain maps to 27–72 (HPKKPGLCPPRPQKPPCVRECKNDWSCPGEQKCCRYGCIFECRDPI). 4 disulfides stabilise this stretch: C34-C60, C43-C64, C47-C59, and C53-C68.

It belongs to the venom waprin family. In terms of tissue distribution, expressed by the venom gland.

The protein localises to the secreted. Its function is as follows. Damages membranes of susceptible bacteria. Has no hemolytic activity. Not toxic to mice. Does not inhibit the proteinases elastase and cathepsin G. The protein is Stewaprin-a of Hoplocephalus stephensii (Stephens's banded snake).